We begin with the raw amino-acid sequence, 226 residues long: Elongation factor 1-delta (226 aa).

The segment at 82 to 131 (SSVATPPVADTKASAAEDDDDDDVDLFGEETEEEKKASEERAAAVKASGK) is disordered. Residues 97 to 113 (AEDDDDDDVDLFGEETE) are compositionally biased toward acidic residues. The segment covering 114 to 124 (EEKKASEERAA) has biased composition (basic and acidic residues).

It belongs to the EF-1-beta/EF-1-delta family. EF-1 is composed of 4 subunits: alpha, beta (1B-alpha=beta'), delta (1B-beta), and gamma (1B-gamma).

In terms of biological role, EF-1-beta and EF-1-beta' stimulate the exchange of GDP bound to EF-1-alpha to GTP. The polypeptide is Elongation factor 1-delta (Spuriopimpinella brachycarpa (Chamnamul)).